A 260-amino-acid polypeptide reads, in one-letter code: Snake venom serine protease homolog KN7 (260 aa).

The N-terminal stretch at 1–18 (MVLIRVLANLLILQLSYA) is a signal peptide. A propeptide spanning residues 19–24 (QKSSEL) is cleaved from the precursor. The region spanning 25 to 251 (IIGGDECNIN…HLDWIKSIIA (227 aa)) is the Peptidase S1 domain. Intrachain disulfides connect Cys31/Cys165, Cys52/Cys68, Cys100/Cys258, Cys144/Cys212, Cys176/Cys191, and Cys202/Cys227. N-linked (GlcNAc...) asparagine glycosylation is found at Asn83, Asn123, and Asn124.

It belongs to the peptidase S1 family. Snake venom subfamily. As to expression, expressed by the venom gland.

It is found in the secreted. In terms of biological role, snake venom serine protease homolog that may act in the hemostasis system of the prey. This chain is Snake venom serine protease homolog KN7, found in Trimeresurus stejnegeri (Chinese green tree viper).